A 228-amino-acid chain; its full sequence is Biosynthetic peptidoglycan transglycosylase (228 aa).

Residues 8–28 (GVAALLALFLLYQLWIFGHIV) form a helical membrane-spanning segment.

Belongs to the glycosyltransferase 51 family.

Its subcellular location is the cell inner membrane. It carries out the reaction [GlcNAc-(1-&gt;4)-Mur2Ac(oyl-L-Ala-gamma-D-Glu-L-Lys-D-Ala-D-Ala)](n)-di-trans,octa-cis-undecaprenyl diphosphate + beta-D-GlcNAc-(1-&gt;4)-Mur2Ac(oyl-L-Ala-gamma-D-Glu-L-Lys-D-Ala-D-Ala)-di-trans,octa-cis-undecaprenyl diphosphate = [GlcNAc-(1-&gt;4)-Mur2Ac(oyl-L-Ala-gamma-D-Glu-L-Lys-D-Ala-D-Ala)](n+1)-di-trans,octa-cis-undecaprenyl diphosphate + di-trans,octa-cis-undecaprenyl diphosphate + H(+). The protein operates within cell wall biogenesis; peptidoglycan biosynthesis. Its function is as follows. Peptidoglycan polymerase that catalyzes glycan chain elongation from lipid-linked precursors. The polypeptide is Biosynthetic peptidoglycan transglycosylase (Laribacter hongkongensis (strain HLHK9)).